The chain runs to 395 residues: Phosphoprotein (395 aa).

2 disordered regions span residues 31–109 (VETV…DTQL) and 126–214 (NKSS…PASV). The span at 65–74 (TPDRQNRSDK) shows a compositional bias: basic and acidic residues. Composition is skewed to polar residues over residues 75–98 (QPSTPEQMTPQNSPPATSTDQPPT), 146–168 (LPTQQQGSQPSRGNSQERPQNRA), and 203–212 (SGQSQDNTPA). The multimerization stretch occupies residues 222 to 285 (DFVQAMMSMM…LGMMKILDPG (64 aa)).

The protein belongs to the rubulavirus/avulavirus P protein family. As to quaternary structure, homotetramer. Interacts (via multimerization domain) with polymerase L; this interaction forms the polymerase L-P complex. Interacts (via N-terminus) with N0 (via Ncore); this interaction allows P to chaperon N0 to avoid N polymerization before encapsidation. Interacts (via C-terminus) with N-RNA template; this interaction positions the polymerase on the template for both transcription and replication.

Functionally, essential cofactor of the RNA polymerase L that plays a central role in the transcription and replication by forming the polymerase complex with RNA polymerase L and recruiting L to the genomic N-RNA template for RNA synthesis. Also plays a central role in the encapsidation of nascent RNA chains by forming the encapsidation complex with the nucleocapsid protein N (N-P complex). Acts as a chaperone for newly synthesized free N protein, so-called N0, allowing encapsidation of nascent RNA chains during replication. The nucleoprotein protein N prevents excessive phosphorylation of P, which leads to down-regulation of viral transcription/ replication. Participates, together with N, in the formation of viral factories (viroplasms), which are large inclusions in the host cytoplasm where replication takes place. In Gallus gallus (Chicken), this protein is Phosphoprotein (P/C).